A 43-amino-acid chain; its full sequence is Thymosin beta-12 (43 aa).

Basic and acidic residues-rich tracts occupy residues 1–25 (MSDK…ETQE) and 33–43 (ETIEQEKQATA). The disordered stretch occupies residues 1 to 43 (MSDKPDLAEVSNFDKTKLKKTETQEKNPLPTKETIEQEKQATA). Position 2 is an N-acetylserine (S2).

The protein belongs to the thymosin beta family.

The protein localises to the cytoplasm. The protein resides in the cytoskeleton. Functionally, plays an important role in the organization of the cytoskeleton. Binds to and sequesters actin monomers (G actin) and therefore inhibits actin polymerization. This is Thymosin beta-12 from Oncorhynchus mykiss (Rainbow trout).